The chain runs to 678 residues: Glycine--tRNA ligase beta subunit (678 aa).

This sequence belongs to the class-II aminoacyl-tRNA synthetase family. In terms of assembly, tetramer of two alpha and two beta subunits.

The protein resides in the cytoplasm. The catalysed reaction is tRNA(Gly) + glycine + ATP = glycyl-tRNA(Gly) + AMP + diphosphate. The sequence is that of Glycine--tRNA ligase beta subunit from Streptococcus pneumoniae (strain ATCC 700669 / Spain 23F-1).